Consider the following 418-residue polypeptide: N-acetylglucosamine-6-phosphate deacetylase (418 aa).

Residue glutamate 154 participates in a divalent metal cation binding. Substrate is bound at residue 165–166; the sequence is CH. A divalent metal cation-binding residues include histidine 223 and histidine 244. Substrate-binding positions include 247 to 248, arginine 255, and 281 to 284; these read NA and DGIH. Residue aspartate 306 is the Proton donor/acceptor of the active site. 340–342 lines the substrate pocket; that stretch reads TAG.

This sequence belongs to the metallo-dependent hydrolases superfamily. NagA family. It depends on a divalent metal cation as a cofactor.

The catalysed reaction is N-acetyl-D-glucosamine 6-phosphate + H2O = D-glucosamine 6-phosphate + acetate. This chain is N-acetylglucosamine-6-phosphate deacetylase, found in Caenorhabditis elegans.